Reading from the N-terminus, the 351-residue chain is Tetraacyldisaccharide 4'-kinase (351 aa).

Lys47–Thr54 lines the ATP pocket.

It belongs to the LpxK family.

It carries out the reaction a lipid A disaccharide + ATP = a lipid IVA + ADP + H(+). Its pathway is glycolipid biosynthesis; lipid IV(A) biosynthesis; lipid IV(A) from (3R)-3-hydroxytetradecanoyl-[acyl-carrier-protein] and UDP-N-acetyl-alpha-D-glucosamine: step 6/6. In terms of biological role, transfers the gamma-phosphate of ATP to the 4'-position of a tetraacyldisaccharide 1-phosphate intermediate (termed DS-1-P) to form tetraacyldisaccharide 1,4'-bis-phosphate (lipid IVA). The protein is Tetraacyldisaccharide 4'-kinase of Cytophaga hutchinsonii (strain ATCC 33406 / DSM 1761 / CIP 103989 / NBRC 15051 / NCIMB 9469 / D465).